A 1097-amino-acid polypeptide reads, in one-letter code: FHIP family protein GK23746 (1097 aa).

Over residues 1–21 (MSWLRSSPLRQSLTRTTSSGN) the composition is skewed to polar residues. The disordered stretch occupies residues 1 to 25 (MSWLRSSPLRQSLTRTTSSGNGIRP). The residue at position 491 (Ser491) is a Phosphoserine. Disordered regions lie at residues 639–684 (DVSA…SGRR), 820–856 (NENSPLHQQQSLQHPHHLQPLPAPQQTGAGAQQRSAY), and 932–1042 (NNQQ…SEPV). Over residues 641-654 (SASSGNGTGSVVVG) the composition is skewed to low complexity. Phosphoserine is present on Ser823. Composition is skewed to low complexity over residues 824–852 (PLHQQQSLQHPHHLQPLPAPQQTGAGAQQ) and 932–948 (NNQQSSNQTHLNSSSSS). Polar residues predominate over residues 949–962 (AVTTCETSLSTQPH). Positions 973–985 (TTSSTISTSSGTT) are enriched in low complexity. Positions 986-995 (AGSGGGGGSG) are enriched in gly residues. 2 stretches are compositionally biased toward low complexity: residues 996 to 1006 (SNSSFSIGGST) and 1013 to 1022 (SNNTTNSSST).

This sequence belongs to the FHIP family.

The polypeptide is FHIP family protein GK23746 (Drosophila willistoni (Fruit fly)).